The following is a 152-amino-acid chain: UPF0266 membrane protein YobD (152 aa).

Transmembrane regions (helical) follow at residues 6–26, 45–65, and 67–87; these read LVLI…QFIM, VDSV…VTSH, and AQMT…IFWI.

It belongs to the UPF0266 family.

It localises to the cell inner membrane. The sequence is that of UPF0266 membrane protein YobD from Salmonella enteritidis PT4 (strain P125109).